A 184-amino-acid chain; its full sequence is ATP synthase subunit b, chloroplastic (184 aa).

A helical transmembrane segment spans residues 27–49; sequence FATNPINLSVVLGVLIFFGKGVL.

Belongs to the ATPase B chain family. As to quaternary structure, F-type ATPases have 2 components, F(1) - the catalytic core - and F(0) - the membrane proton channel. F(1) has five subunits: alpha(3), beta(3), gamma(1), delta(1), epsilon(1). F(0) has four main subunits: a(1), b(1), b'(1) and c(10-14). The alpha and beta chains form an alternating ring which encloses part of the gamma chain. F(1) is attached to F(0) by a central stalk formed by the gamma and epsilon chains, while a peripheral stalk is formed by the delta, b and b' chains.

The protein localises to the plastid. It is found in the chloroplast thylakoid membrane. F(1)F(0) ATP synthase produces ATP from ADP in the presence of a proton or sodium gradient. F-type ATPases consist of two structural domains, F(1) containing the extramembraneous catalytic core and F(0) containing the membrane proton channel, linked together by a central stalk and a peripheral stalk. During catalysis, ATP synthesis in the catalytic domain of F(1) is coupled via a rotary mechanism of the central stalk subunits to proton translocation. Its function is as follows. Component of the F(0) channel, it forms part of the peripheral stalk, linking F(1) to F(0). This is ATP synthase subunit b, chloroplastic from Ipomoea purpurea (Common morning glory).